We begin with the raw amino-acid sequence, 177 residues long: Probable phospholipid hydroperoxide glutathione peroxidase (177 aa).

Cysteine 42 is an active-site residue.

It belongs to the glutathione peroxidase family.

Its subcellular location is the cytoplasm. The enzyme catalyses a hydroperoxy polyunsaturated fatty acid + 2 glutathione = a hydroxy polyunsaturated fatty acid + glutathione disulfide + H2O. In terms of biological role, protects cells and enzymes from oxidative damage, by catalyzing the reduction of hydrogen peroxide, lipid peroxides and organic hydroperoxide, by glutathione. This Encephalitozoon cuniculi (strain GB-M1) (Microsporidian parasite) protein is Probable phospholipid hydroperoxide glutathione peroxidase.